Consider the following 498-residue polypeptide: Sulfate adenylyltransferase subunit 1 (498 aa).

Positions 30-246 constitute a tr-type G domain; the sequence is TRPLRLITCG…LELATTRSAQ (217 aa). A G1 region spans residues 39-46; the sequence is GSVDDGKS. Residue 39 to 46 coordinates GTP; the sequence is GSVDDGKS. Positions 97–101 are G2; that stretch reads GITID. Residues 118–121 are G3; it reads DTPG. GTP-binding positions include 118–122 and 173–176; these read DTPGH and NKID. The tract at residues 173–176 is G4; that stretch reads NKID. Residues 210-212 form a G5 region; that stretch reads SAL.

This sequence belongs to the TRAFAC class translation factor GTPase superfamily. Classic translation factor GTPase family. CysN/NodQ subfamily. In terms of assembly, heterodimer composed of CysD, the smaller subunit, and CysN.

It carries out the reaction sulfate + ATP + H(+) = adenosine 5'-phosphosulfate + diphosphate. Its pathway is sulfur metabolism; hydrogen sulfide biosynthesis; sulfite from sulfate: step 1/3. In terms of biological role, with CysD forms the ATP sulfurylase (ATPS) that catalyzes the adenylation of sulfate producing adenosine 5'-phosphosulfate (APS) and diphosphate, the first enzymatic step in sulfur assimilation pathway. APS synthesis involves the formation of a high-energy phosphoric-sulfuric acid anhydride bond driven by GTP hydrolysis by CysN coupled to ATP hydrolysis by CysD. The protein is Sulfate adenylyltransferase subunit 1 of Rhizobium meliloti (strain 1021) (Ensifer meliloti).